The chain runs to 1950 residues: E3 ubiquitin-protein ligase UBR1 (1950 aa).

Residues His-118, Cys-123, Cys-136, Cys-139, Cys-148, Cys-151, His-157, His-160, His-161, Cys-175, Cys-177, and Cys-189 each contribute to the Zn(2+) site. The UBR-type zinc-finger motif lies at 121 to 194 (RNCGRKFKIG…SPLHCKAEEQ (74 aa)). Phosphoserine occurs at positions 296 and 300. Residues 678–681 (HVLH) form a ubiquitin-binding loop region. Asp-952 contacts Zn(2+). Residues 1165 to 1200 (KERKRRLAKKHQARLLAKFNNQQTKFMKEHESEFDE) form a UBC2-binding region (U2BR) region. Zn(2+) is bound by residues Cys-1220, Cys-1223, Cys-1295, His-1297, His-1300, Cys-1303, Cys-1320, and Cys-1323. The RING-type; atypical zinc finger occupies 1220–1324 (CALCQDSSST…SNAFICPLCQ (105 aa)). Positions 1333–1665 (LCQTSKANTG…YEYCGIIKLI (333 aa)) are cap helical domain (CHD). Zn(2+) is bound by residues Cys-1703, Cys-1706, His-1722, Cys-1727, His-1763, and Asp-1775. Disordered stretches follow at residues 1826-1846 (RPRRIPPTDEDDEDMEEGEDG) and 1893-1950 (TLQP…REIW). Acidic residues-rich tracts occupy residues 1833-1846 (TDEDDEDMEEGEDG) and 1934-1950 (DEDDSDDNDDSDEREIW). Ser-1938 carries the post-translational modification Phosphoserine.

Belongs to the E3 ubiquitin-protein ligase UBR1-like family. Interacts with UBC2. Interacts with RPN2, RPT1 and RPT6 from the 26S proteasome.

The catalysed reaction is S-ubiquitinyl-[E2 ubiquitin-conjugating enzyme]-L-cysteine + [acceptor protein]-L-lysine = [E2 ubiquitin-conjugating enzyme]-L-cysteine + N(6)-ubiquitinyl-[acceptor protein]-L-lysine.. It participates in protein modification; protein ubiquitination. In terms of biological role, ubiquitin ligase protein which is a component of the N-end rule pathway. Recognizes and binds to proteins bearing specific N-terminal residues that are destabilizing according to the N-end rule, leading to their ubiquitination and subsequent degradation. Recognizes both type-1 and type-2 N-degrons, containing positively charged amino acids (Arg, Lys and His) and bulky and hydrophobic amino acids, respectively. The polypeptide is E3 ubiquitin-protein ligase UBR1 (Saccharomyces cerevisiae (strain ATCC 204508 / S288c) (Baker's yeast)).